The primary structure comprises 286 residues: Bifunctional protein FolD (286 aa).

Residues 165 to 167 (GRS) and serine 190 contribute to the NADP(+) site.

Belongs to the tetrahydrofolate dehydrogenase/cyclohydrolase family. Homodimer.

It catalyses the reaction (6R)-5,10-methylene-5,6,7,8-tetrahydrofolate + NADP(+) = (6R)-5,10-methenyltetrahydrofolate + NADPH. The enzyme catalyses (6R)-5,10-methenyltetrahydrofolate + H2O = (6R)-10-formyltetrahydrofolate + H(+). It functions in the pathway one-carbon metabolism; tetrahydrofolate interconversion. In terms of biological role, catalyzes the oxidation of 5,10-methylenetetrahydrofolate to 5,10-methenyltetrahydrofolate and then the hydrolysis of 5,10-methenyltetrahydrofolate to 10-formyltetrahydrofolate. This Burkholderia orbicola (strain MC0-3) protein is Bifunctional protein FolD.